Here is a 404-residue protein sequence, read N- to C-terminus: Rhomboid-related protein 3 (404 aa).

EF-hand domains lie at 34-69 (APED…HSSK) and 70-105 (LDPH…KRSN). A run of 7 helical transmembrane segments spans residues 164–184 (WFMI…GVLL), 227–247 (LGLN…VHGA), 250–270 (IGLV…VADM), 274–294 (VVGS…NIVM), 305–324 (LLRM…RAVW), 338–358 (PSFV…VVVL), and 371–391 (WWIF…WNIF). Catalysis depends on S278, which acts as the Nucleophile. The active site involves H343.

This sequence belongs to the peptidase S54 family.

It localises to the membrane. It carries out the reaction Cleaves type-1 transmembrane domains using a catalytic dyad composed of serine and histidine that are contributed by different transmembrane domains.. In terms of biological role, may be involved in regulated intramembrane proteolysis and the subsequent release of functional polypeptides from their membrane anchors. This Mus musculus (Mouse) protein is Rhomboid-related protein 3 (Rhbdl3).